Reading from the N-terminus, the 342-residue chain is Transmembrane protein 59-like (342 aa).

A signal peptide spans 1–24 (MAAVALMPPPLLLLLLLASPPAAS). N97 is a glycosylation site (N-linked (GlcNAc...) asparagine). A helical transmembrane segment spans residues 268-290 (WILACCLFLSVLVMLWLSCSTLV). Residues 340-342 (TKL) carry the Microbody targeting signal motif.

Belongs to the TMEM59 family. Expressed preferentially at high level in the brain.

The protein resides in the golgi apparatus membrane. Modulates the O-glycosylation and complex N-glycosylation steps occurring during the Golgi maturation of APP. Inhibits APP transport to the cell surface and further shedding. This is Transmembrane protein 59-like (TMEM59L) from Homo sapiens (Human).